A 247-amino-acid polypeptide reads, in one-letter code: UPF0273 protein PF1931 (247 aa).

The 245-residue stretch at 3 to 247 (RRVKTGIPGM…VLKRGRIYEL (245 aa)) folds into the KaiC domain. 30 to 37 (GGPGTGKS) is a binding site for ATP.

Belongs to the UPF0273 family.

The protein is UPF0273 protein PF1931 of Pyrococcus furiosus (strain ATCC 43587 / DSM 3638 / JCM 8422 / Vc1).